Consider the following 399-residue polypeptide: Probable dual-specificity RNA methyltransferase RlmN (399 aa).

Glutamate 97 serves as the catalytic Proton acceptor. One can recognise a Radical SAM core domain in the interval 103–381 (YPDRATVCVS…CTVRVERGVS (279 aa)). Cysteine 110 and cysteine 386 are joined by a disulfide. The [4Fe-4S] cluster site is built by cysteine 117, cysteine 121, and cysteine 124. Residues 203-204 (GE), serine 235, 258-260 (SLH), and asparagine 343 each bind S-adenosyl-L-methionine. Cysteine 386 acts as the S-methylcysteine intermediate in catalysis.

Belongs to the radical SAM superfamily. RlmN family. The cofactor is [4Fe-4S] cluster.

The protein localises to the cytoplasm. The enzyme catalyses adenosine(2503) in 23S rRNA + 2 reduced [2Fe-2S]-[ferredoxin] + 2 S-adenosyl-L-methionine = 2-methyladenosine(2503) in 23S rRNA + 5'-deoxyadenosine + L-methionine + 2 oxidized [2Fe-2S]-[ferredoxin] + S-adenosyl-L-homocysteine. The catalysed reaction is adenosine(37) in tRNA + 2 reduced [2Fe-2S]-[ferredoxin] + 2 S-adenosyl-L-methionine = 2-methyladenosine(37) in tRNA + 5'-deoxyadenosine + L-methionine + 2 oxidized [2Fe-2S]-[ferredoxin] + S-adenosyl-L-homocysteine. Specifically methylates position 2 of adenine 2503 in 23S rRNA and position 2 of adenine 37 in tRNAs. The sequence is that of Probable dual-specificity RNA methyltransferase RlmN from Roseiflexus sp. (strain RS-1).